Reading from the N-terminus, the 122-residue chain is Large ribosomal subunit protein bL12 (122 aa).

The protein belongs to the bacterial ribosomal protein bL12 family. As to quaternary structure, homodimer. Part of the ribosomal stalk of the 50S ribosomal subunit. Forms a multimeric L10(L12)X complex, where L10 forms an elongated spine to which 2 to 4 L12 dimers bind in a sequential fashion. Binds GTP-bound translation factors.

Forms part of the ribosomal stalk which helps the ribosome interact with GTP-bound translation factors. Is thus essential for accurate translation. In Blochmanniella pennsylvanica (strain BPEN), this protein is Large ribosomal subunit protein bL12.